The primary structure comprises 141 residues: Large ribosomal subunit protein uL16 (141 aa).

This sequence belongs to the universal ribosomal protein uL16 family. Part of the 50S ribosomal subunit.

Its function is as follows. Binds 23S rRNA and is also seen to make contacts with the A and possibly P site tRNAs. This Petrotoga mobilis (strain DSM 10674 / SJ95) protein is Large ribosomal subunit protein uL16.